The chain runs to 239 residues: Peptidyl-tRNA hydrolase (239 aa).

Tyr14 serves as a coordination point for tRNA. His19 acts as the Proton acceptor in catalysis. Residues Phe64, Asn66, and Asn112 each contribute to the tRNA site. The interval 186-239 is disordered; it reads RTAPPRPSTGTGRPPAKTPARAEEPPAPAASPAPATAPLPDARSPLQKLVDRFK. The span at 193 to 204 shows a compositional bias: low complexity; that stretch reads STGTGRPPAKTP. Pro residues predominate over residues 210-222; it reads PPAPAASPAPATA.

Belongs to the PTH family. As to quaternary structure, monomer.

The protein resides in the cytoplasm. It carries out the reaction an N-acyl-L-alpha-aminoacyl-tRNA + H2O = an N-acyl-L-amino acid + a tRNA + H(+). Functionally, hydrolyzes ribosome-free peptidyl-tRNAs (with 1 or more amino acids incorporated), which drop off the ribosome during protein synthesis, or as a result of ribosome stalling. Catalyzes the release of premature peptidyl moieties from peptidyl-tRNA molecules trapped in stalled 50S ribosomal subunits, and thus maintains levels of free tRNAs and 50S ribosomes. The chain is Peptidyl-tRNA hydrolase from Ruegeria pomeroyi (strain ATCC 700808 / DSM 15171 / DSS-3) (Silicibacter pomeroyi).